The sequence spans 93 residues: Large ribosomal subunit protein uL23cz/uL23cy (93 aa).

This sequence belongs to the universal ribosomal protein uL23 family. In terms of assembly, part of the 50S ribosomal subunit.

It is found in the plastid. It localises to the chloroplast. Binds to 23S rRNA. This is Large ribosomal subunit protein uL23cz/uL23cy (rpl23-A) from Helianthus annuus (Common sunflower).